Reading from the N-terminus, the 378-residue chain is L-asparaginase-like protein GF11609 (378 aa).

A signal peptide spans 1-21; the sequence is MCSPLPLLILRLLLLTHPSLG. Intrachain disulfides connect C71/C76, C170/C186, and C325/C352.

Belongs to the Ntn-hydrolase family.

This Drosophila ananassae (Fruit fly) protein is L-asparaginase-like protein GF11609.